The primary structure comprises 113 residues: MTISAQVIDTIVEWIDDNLHQPLRIEDIARHAGYSKWHLQRLFLQYKGESLGRYIRERKLLLAARDLRESDERVYEICLRYGFESQQTFTRIFTRTFHQPPGAYRKENHSRTH.

Residues 9 to 107 (DTIVEWIDDN…HQPPGAYRKE (99 aa)) form the HTH araC/xylS-type domain. 2 DNA-binding regions (H-T-H motif) span residues 26–47 (EDIA…LQYK) and 74–97 (VYEI…TRTF).

In terms of biological role, probable transcriptional activator. This Enterobacter cloacae protein is Transcriptional activator RamA (ramA).